A 384-amino-acid polypeptide reads, in one-letter code: Cell adhesion molecule CEACAM18 (384 aa).

The signal sequence occupies residues 1-30 (MDLSRPRWSLWRRVFLMASLLACGICQASG). N-linked (GlcNAc...) asparagine glycans are attached at residues N108, N112, N121, N162, and N270. The 88-residue stretch at 227 to 314 (PDYVLLRSNP…LIMYMDVRIQ (88 aa)) folds into the Ig-like C2-type domain. Cysteines 255 and 296 form a disulfide. The segment at 358–384 (QPLLNQDKSGSMSVHPRPEDKTRRASR) is disordered. A compositionally biased stretch (polar residues) spans 359 to 369 (PLLNQDKSGSM). Residues 373-384 (PRPEDKTRRASR) are compositionally biased toward basic and acidic residues.

It belongs to the immunoglobulin superfamily. CEA family.

The polypeptide is Cell adhesion molecule CEACAM18 (Homo sapiens (Human)).